A 366-amino-acid polypeptide reads, in one-letter code: Chorismate synthase (366 aa).

The NADP(+) site is built by R48 and R54. FMN contacts are provided by residues 125–127 (RSS), 242–243 (NA), G287, 302–306 (KPTSS), and R328.

It belongs to the chorismate synthase family. Homotetramer. FMNH2 serves as cofactor.

The catalysed reaction is 5-O-(1-carboxyvinyl)-3-phosphoshikimate = chorismate + phosphate. It participates in metabolic intermediate biosynthesis; chorismate biosynthesis; chorismate from D-erythrose 4-phosphate and phosphoenolpyruvate: step 7/7. Functionally, catalyzes the anti-1,4-elimination of the C-3 phosphate and the C-6 proR hydrogen from 5-enolpyruvylshikimate-3-phosphate (EPSP) to yield chorismate, which is the branch point compound that serves as the starting substrate for the three terminal pathways of aromatic amino acid biosynthesis. This reaction introduces a second double bond into the aromatic ring system. This Rhodospirillum rubrum (strain ATCC 11170 / ATH 1.1.1 / DSM 467 / LMG 4362 / NCIMB 8255 / S1) protein is Chorismate synthase.